Consider the following 161-residue polypeptide: Urease accessory protein UreE (161 aa).

The disordered stretch occupies residues 138–161 (RGAYHAHGGHSHDHGQGHHHHDHG).

This sequence belongs to the UreE family.

It is found in the cytoplasm. Involved in urease metallocenter assembly. Binds nickel. Probably functions as a nickel donor during metallocenter assembly. This chain is Urease accessory protein UreE, found in Agrobacterium fabrum (strain C58 / ATCC 33970) (Agrobacterium tumefaciens (strain C58)).